Reading from the N-terminus, the 534-residue chain is ATP synthase subunit beta 2 (534 aa).

185–192 (GGAGVGKT) is an ATP binding site. The span at 494–505 (AAAREADARREA) shows a compositional bias: basic and acidic residues. The disordered stretch occupies residues 494 to 534 (AAAREADARREAAAAASGAGPGTTSDPASGSAEPQGARHGR).

The protein belongs to the ATPase alpha/beta chains family. F-type ATPases have 2 components, CF(1) - the catalytic core - and CF(0) - the membrane proton channel. CF(1) has five subunits: alpha(3), beta(3), gamma(1), delta(1), epsilon(1). CF(0) has three main subunits: a(1), b(2) and c(9-12). The alpha and beta chains form an alternating ring which encloses part of the gamma chain. CF(1) is attached to CF(0) by a central stalk formed by the gamma and epsilon chains, while a peripheral stalk is formed by the delta and b chains.

Its subcellular location is the cell inner membrane. The catalysed reaction is ATP + H2O + 4 H(+)(in) = ADP + phosphate + 5 H(+)(out). Functionally, produces ATP from ADP in the presence of a proton gradient across the membrane. The catalytic sites are hosted primarily by the beta subunits. This is ATP synthase subunit beta 2 from Burkholderia mallei (strain NCTC 10247).